Here is a 228-residue protein sequence, read N- to C-terminus: uncharacterized protein (228 aa).

Belongs to the HAD-like hydrolase superfamily.

The protein localises to the cytoplasm. It localises to the nucleus. This is an uncharacterized protein from Schizosaccharomyces pombe (strain 972 / ATCC 24843) (Fission yeast).